The following is a 180-amino-acid chain: Large ribosomal subunit protein uL5 (180 aa).

Belongs to the universal ribosomal protein uL5 family. In terms of assembly, part of the 50S ribosomal subunit; part of the 5S rRNA/L5/L18/L25 subcomplex. Contacts the 5S rRNA and the P site tRNA. Forms a bridge to the 30S subunit in the 70S ribosome.

In terms of biological role, this is one of the proteins that bind and probably mediate the attachment of the 5S RNA into the large ribosomal subunit, where it forms part of the central protuberance. In the 70S ribosome it contacts protein S13 of the 30S subunit (bridge B1b), connecting the 2 subunits; this bridge is implicated in subunit movement. Contacts the P site tRNA; the 5S rRNA and some of its associated proteins might help stabilize positioning of ribosome-bound tRNAs. This Streptococcus sanguinis (strain SK36) protein is Large ribosomal subunit protein uL5.